A 96-amino-acid chain; its full sequence is RNA-binding protein Hfq (96 aa).

A Sm domain is found at 9–68 (DPYLNALRRERIPVSIYLVNGIKLQGQIESFDQFVILLKNTVNQMVYKHAISTVVPARSV).

It belongs to the Hfq family. In terms of assembly, homohexamer.

In terms of biological role, RNA chaperone that binds small regulatory RNA (sRNAs) and mRNAs to facilitate mRNA translational regulation in response to envelope stress, environmental stress and changes in metabolite concentrations. Also binds with high specificity to tRNAs. This chain is RNA-binding protein Hfq, found in Histophilus somni (strain 129Pt) (Haemophilus somnus).